A 122-amino-acid polypeptide reads, in one-letter code: UPF0102 protein VIBHAR_00890 (122 aa).

The protein belongs to the UPF0102 family.

The protein is UPF0102 protein VIBHAR_00890 of Vibrio campbellii (strain ATCC BAA-1116).